The primary structure comprises 156 residues: Anaerobic ribonucleoside-triphosphate reductase-activating protein (156 aa).

Residues cysteine 26, cysteine 30, and cysteine 33 each coordinate [4Fe-4S] cluster. Residues 32–34 and glycine 72 contribute to the S-adenosyl-L-methionine site; that span reads GCY.

It belongs to the organic radical-activating enzymes family. In terms of assembly, forms a tetramer composed of two NrdD and two NrdG subunits. [4Fe-4S] cluster is required as a cofactor.

The catalysed reaction is glycyl-[protein] + reduced [flavodoxin] + S-adenosyl-L-methionine = glycin-2-yl radical-[protein] + semiquinone [flavodoxin] + 5'-deoxyadenosine + L-methionine + H(+). Activation of anaerobic ribonucleoside-triphosphate reductase under anaerobic conditions by generation of an organic free radical, using S-adenosylmethionine and reduced flavodoxin as cosubstrates to produce 5'-deoxy-adenosine. In Escherichia coli (Bacteriophage T4), this protein is Anaerobic ribonucleoside-triphosphate reductase-activating protein (NRDG).